The primary structure comprises 1141 residues: Tetratricopeptide repeat protein 17 (1141 aa).

A TPR 1 repeat occupies 295 to 328 (FTSYYTLGNIYAMLGEYNHSVLCYDHALQARPGF). Positions 340–382 (CQQKLEQKLEAQHRSLQRTLNELKEYQKQHDHYLRQQEILEKH) form a coiled coil. 5 TPR repeats span residues 619–652 (WLIL…APLQ), 689–722 (PLTF…TTKC), 1014–1048 (SWVL…APHQ), 1051–1084 (DVPL…APHF), and 1085–1118 (AVNH…QPEF).

The protein belongs to the TTC17 family. In terms of assembly, interacts with CATIP. Expressed in germ cells as well as in somatic cells of the testis (at protein level).

Its subcellular location is the cytoplasm. The protein localises to the cell membrane. The protein resides in the cytoskeleton. Functionally, plays a role in primary ciliogenesis by modulating actin polymerization. The polypeptide is Tetratricopeptide repeat protein 17 (TTC17) (Homo sapiens (Human)).